We begin with the raw amino-acid sequence, 620 residues long: MTEMRSAKIMSGRVFAGARALYRAAGVSGDDMGKKPIIAIANSFDEFLPGHVHLNKVGRIVSEAIREAGGIPREFNTMAVDDGIAMGHTGMLYSLPSRDIIADTVEYQCNAHCADALICIPNCDKVVPGMLMAALRLNIPTVFVSGGPMEAGTTVLADGTVKSTDLIDVMYATADDNVSDEELLNYEKTVCPTCGSCAGMFTANSMNCLTEAIGLALPGNGTILASHSYRKDLFKRAAKQVVKIAHQYYDDSDDSVLPRSIATKEAFENAMTMDVAMGGSTNTVLHILAMAQSADVDFTLDDIERISHTVPCICKASPSGKWEISDVHRAGGITGILGELDRAGKLHTNVHSIDYPTLEAKLADWDIMRPTCTEEAQQMYKAAPGHIISPEPWTHTTLFDSLDRDRTNGAIHDINHPEIHEGGLAVLRGNLAPDGCVVKTAGVPPEIWKFRGPALVVDSQEQAIEVILNDTLKPGMALVIRYEGPKGGPGMQEMLYPTSFVKGKGIGKQVAMLTDGRYSGGSSGLAIGHMAPEAANKGPVALIKNGDIIDIDIEARSVNVELTDEQLDERRRELEAGDGYVAHRNRHVSQALKAYAAFARSADKGATRDPELINKLSGLD.

Asp-82 contributes to the Mg(2+) binding site. Cys-123 is a [2Fe-2S] cluster binding site. Asp-124 and Lys-125 together coordinate Mg(2+). Lys-125 bears the N6-carboxylysine mark. Cys-197 is a binding site for [2Fe-2S] cluster. Glu-493 serves as a coordination point for Mg(2+). The active-site Proton acceptor is Ser-519.

Belongs to the IlvD/Edd family. Homodimer. The cofactor is [2Fe-2S] cluster. Mg(2+) is required as a cofactor.

The enzyme catalyses (2R)-2,3-dihydroxy-3-methylbutanoate = 3-methyl-2-oxobutanoate + H2O. The catalysed reaction is (2R,3R)-2,3-dihydroxy-3-methylpentanoate = (S)-3-methyl-2-oxopentanoate + H2O. Its pathway is amino-acid biosynthesis; L-isoleucine biosynthesis; L-isoleucine from 2-oxobutanoate: step 3/4. It participates in amino-acid biosynthesis; L-valine biosynthesis; L-valine from pyruvate: step 3/4. In terms of biological role, functions in the biosynthesis of branched-chain amino acids. Catalyzes the dehydration of (2R,3R)-2,3-dihydroxy-3-methylpentanoate (2,3-dihydroxy-3-methylvalerate) into 2-oxo-3-methylpentanoate (2-oxo-3-methylvalerate) and of (2R)-2,3-dihydroxy-3-methylbutanoate (2,3-dihydroxyisovalerate) into 2-oxo-3-methylbutanoate (2-oxoisovalerate), the penultimate precursor to L-isoleucine and L-valine, respectively. This chain is Dihydroxy-acid dehydratase, found in Bifidobacterium longum (strain NCC 2705).